The following is a 475-amino-acid chain: Protein ABCI7, chloroplastic (475 aa).

A chloroplast-targeting transit peptide spans 1–36 (MAAATVLGRLSLIPNLSSKPKLKSNRRTTSTSVSVR).

In terms of assembly, interacts with NAP7.

The protein resides in the plastid. It localises to the chloroplast. This chain is Protein ABCI7, chloroplastic (ABCI7), found in Arabidopsis thaliana (Mouse-ear cress).